The following is an 85-amino-acid chain: UPF0335 protein Plav_2034 (85 aa).

Belongs to the UPF0335 family.

This Parvibaculum lavamentivorans (strain DS-1 / DSM 13023 / NCIMB 13966) protein is UPF0335 protein Plav_2034.